Consider the following 282-residue polypeptide: Cell division protein FtsQ (282 aa).

At 1–30 (MINIGPPKKRRLRRKGNRFKKTRRVIPWRR) the chain is on the cytoplasmic side. Residues 31 to 51 (LMIGALWGTMALASLGMVVAV) form a helical membrane-spanning segment. The Periplasmic segment spans residues 52 to 282 (ACFAGQMLFA…LDAGELRGKG (231 aa)). The 69-residue stretch at 65 to 133 (FKVERIQVEN…DQLVIRVDER (69 aa)) folds into the POTRA domain.

It belongs to the FtsQ/DivIB family. FtsQ subfamily.

It is found in the cell inner membrane. Functionally, essential cell division protein. In Syntrophotalea carbinolica (strain DSM 2380 / NBRC 103641 / GraBd1) (Pelobacter carbinolicus), this protein is Cell division protein FtsQ.